Reading from the N-terminus, the 129-residue chain is DNA-directed RNA polymerase II subunit RPB9 (129 aa).

Zn(2+) is bound by residues Cys-21, Cys-24, Cys-43, Cys-46, Cys-90, Cys-93, Cys-118, and Cys-123. A C4-type zinc finger spans residues 21–46; sequence CQECNNMLYPKEDKENKILLYACRNC. Residues 86-128 form a TFIIS-type zinc finger; sequence EDHACPKCSHREAVFFQAQTRRAEEEMRLYYVCTNQNCTHRWT.

It belongs to the archaeal RpoM/eukaryotic RPA12/RPB9/RPC11 RNA polymerase family. As to quaternary structure, component of the RNA polymerase II (Pol II) complex consisting of 12 subunits.

Its subcellular location is the nucleus. It is found in the nucleolus. Its function is as follows. DNA-dependent RNA polymerase catalyzes the transcription of DNA into RNA using the four ribonucleoside triphosphates as substrates. Component of RNA polymerase II which synthesizes mRNA precursors and many functional non-coding RNAs. Pol II is the central component of the basal RNA polymerase II transcription machinery. It is composed of mobile elements that move relative to each other. RPB9 is part of the upper jaw surrounding the central large cleft and thought to grab the incoming DNA template. The polypeptide is DNA-directed RNA polymerase II subunit RPB9 (Drosophila melanogaster (Fruit fly)).